Consider the following 173-residue polypeptide: dCTP deaminase (173 aa).

Residues 97-102 and aspartate 113 each bind dCTP; that span reads RSSFAR. Glutamate 123 serves as the catalytic Proton donor/acceptor. Residues tyrosine 155 and glutamine 162 each contribute to the dCTP site.

The protein belongs to the dCTP deaminase family. As to quaternary structure, homotrimer.

It carries out the reaction dCTP + H2O + H(+) = dUTP + NH4(+). It functions in the pathway pyrimidine metabolism; dUMP biosynthesis; dUMP from dCTP (dUTP route): step 1/2. Functionally, catalyzes the deamination of dCTP to dUTP. This is dCTP deaminase from Acidianus ambivalens (Desulfurolobus ambivalens).